A 247-amino-acid chain; its full sequence is GTP cyclohydrolase 1 type 2 homolog (247 aa).

Positions 63, 64, 101, 215, and 219 each coordinate a divalent metal cation.

This sequence belongs to the GTP cyclohydrolase I type 2/NIF3 family. As to quaternary structure, homohexamer.

In Buchnera aphidicola subsp. Schizaphis graminum (strain Sg), this protein is GTP cyclohydrolase 1 type 2 homolog.